The sequence spans 241 residues: Glycerol-3-phosphate acyltransferase (241 aa).

Helical transmembrane passes span 3–23 (ILYSILINLALFLLGYLLLGS), 63–83 (IVFATDVLKTLLPILIISAIV), 97–117 (YISPQALGLGVVIGHIFPAYY), 131–151 (LIISINIILFLIAFLIFLLVV), 156–176 (IVSLGSITVAFSLLLFVWMPW), and 198–218 (LVNYWYVSPIIYTLCAFLVLV).

Belongs to the PlsY family. In terms of assembly, probably interacts with PlsX.

It is found in the cell membrane. It carries out the reaction an acyl phosphate + sn-glycerol 3-phosphate = a 1-acyl-sn-glycero-3-phosphate + phosphate. It participates in lipid metabolism; phospholipid metabolism. Functionally, catalyzes the transfer of an acyl group from acyl-phosphate (acyl-PO(4)) to glycerol-3-phosphate (G3P) to form lysophosphatidic acid (LPA). This enzyme utilizes acyl-phosphate as fatty acyl donor, but not acyl-CoA or acyl-ACP. This chain is Glycerol-3-phosphate acyltransferase, found in Mycoplasmopsis agalactiae (strain NCTC 10123 / CIP 59.7 / PG2) (Mycoplasma agalactiae).